Reading from the N-terminus, the 152-residue chain is Endoribonuclease YbeY (152 aa).

3 residues coordinate Zn(2+): His113, His117, and His123.

The protein belongs to the endoribonuclease YbeY family. The cofactor is Zn(2+).

The protein localises to the cytoplasm. In terms of biological role, single strand-specific metallo-endoribonuclease involved in late-stage 70S ribosome quality control and in maturation of the 3' terminus of the 16S rRNA. The protein is Endoribonuclease YbeY of Janthinobacterium sp. (strain Marseille) (Minibacterium massiliensis).